Reading from the N-terminus, the 501-residue chain is Cytochrome P450 monooxygenase 76AD131 (501 aa).

Residues 1 to 21 traverse the membrane as a helical segment; sequence MGYYAIFAVVLPFLWTCFYLL. N-linked (GlcNAc...) asparagine glycosylation is found at Asn115 and Asn264. Cys444 contributes to the heme binding site.

The protein belongs to the cytochrome P450 family. Heme serves as cofactor. In terms of tissue distribution, highly expressed in aerial parts, in both skin and flesh tissues.

The protein resides in the membrane. The catalysed reaction is tyramine + reduced [NADPH--hemoprotein reductase] + O2 = dopamine + oxidized [NADPH--hemoprotein reductase] + H2O + H(+). It carries out the reaction 3-methoxytyramine + reduced [NADPH--hemoprotein reductase] + O2 = 3,4-dihydroxy-5-methoxyphenethylamine + oxidized [NADPH--hemoprotein reductase] + H2O + H(+). It functions in the pathway aromatic compound metabolism. It participates in alkaloid biosynthesis. Cytochrome P450 monooxygenase participating in the biosynthesis of natural products derived from phenylethylamine, including mescaline, a natural hallucinogen potentially used in psychotherapeutic treatments. Catalyzes the hydroxylation of tyramine to dopamine and of 3-methoxytyramine to 3,4-dihydroxy-5-methoxyphenethylamine. The polypeptide is Cytochrome P450 monooxygenase 76AD131 (Lophophora williamsii (Peyote)).